Here is a 588-residue protein sequence, read N- to C-terminus: Cyclin-dependent kinase 8 (588 aa).

Residues Phe-26–Phe-348 form the Protein kinase domain. Residues Ile-32–Val-40 and Lys-60 contribute to the ATP site. Asp-158 acts as the Proton acceptor in catalysis. 3 disordered regions span residues Met-376–Pro-426, Pro-510–Gly-529, and Met-546–Arg-588. Residues Gln-382 to Pro-426 are compositionally biased toward low complexity. The span at Met-557–Arg-588 shows a compositional bias: low complexity.

Belongs to the protein kinase superfamily. CMGC Ser/Thr protein kinase family. CDC2/CDKX subfamily. In terms of assembly, component of the Mediator complex. Requires Mg(2+) as cofactor.

The protein resides in the nucleus. It catalyses the reaction L-seryl-[protein] + ATP = O-phospho-L-seryl-[protein] + ADP + H(+). The catalysed reaction is L-threonyl-[protein] + ATP = O-phospho-L-threonyl-[protein] + ADP + H(+). It carries out the reaction [DNA-directed RNA polymerase] + ATP = phospho-[DNA-directed RNA polymerase] + ADP + H(+). Component of the Mediator complex, a coactivator involved in regulated gene transcription of nearly all RNA polymerase II-dependent genes. Mediator functions as a bridge to convey information from gene-specific regulatory proteins to the basal RNA polymerase II transcription machinery. Mediator is recruited to promoters by direct interactions with regulatory proteins and serves as a scaffold for the assembly of a functional pre-initiation complex with RNA polymerase II and the general transcription factors. Phosphorylates the CTD (C-terminal domain) of the large subunit of RNA polymerase II (RNAp II), which may inhibit the formation of a transcription initiation complex. The sequence is that of Cyclin-dependent kinase 8 (cdk-8) from Caenorhabditis elegans.